The following is an 81-amino-acid chain: Large ribosomal subunit protein bL31B (81 aa).

This sequence belongs to the bacterial ribosomal protein bL31 family. Type B subfamily. Part of the 50S ribosomal subunit.

The protein is Large ribosomal subunit protein bL31B of Bacillus licheniformis (strain ATCC 14580 / DSM 13 / JCM 2505 / CCUG 7422 / NBRC 12200 / NCIMB 9375 / NCTC 10341 / NRRL NRS-1264 / Gibson 46).